Consider the following 22-residue polypeptide: Hemoglobinase-like protein 2 (22 aa).

The protein belongs to the peptidase C13 family.

It carries out the reaction Hydrolysis of proteins and small molecule substrates at -Asn-|-Xaa- bonds.. In Fasciola hepatica (Liver fluke), this protein is Hemoglobinase-like protein 2.